Here is a 167-residue protein sequence, read N- to C-terminus: UPF0303 protein mlr5144 (167 aa).

The protein belongs to the UPF0303 family.

This is UPF0303 protein mlr5144 from Mesorhizobium japonicum (strain LMG 29417 / CECT 9101 / MAFF 303099) (Mesorhizobium loti (strain MAFF 303099)).